A 466-amino-acid polypeptide reads, in one-letter code: Rho GTPase-activating protein 1 (466 aa).

Disordered stretches follow at residues 1–31 (MTEV…SLSY) and 65–84 (EEQD…DDGG). Low complexity predominate over residues 8–31 (PSSPSASHSSSSSSSSPSPSSLSY). A compositionally biased stretch (basic and acidic residues) spans 65–74 (EEQDLRRRSS). A CRIB domain is found at 117-130 (IGWPTNVRHVAHVT). Positions 162–342 (VSTESMQLSY…TLIEKTLRER (181 aa)) constitute a Rho-GAP domain. Residues 354 to 402 (PLEPSDESGHQSPSQSLAFNTSEQSEETQSDNIENAENQSSSSEISDEL) form a disordered region. 2 stretches are compositionally biased toward polar residues: residues 363-376 (HQSP…NTSE) and 383-397 (SDNI…SSSE).

Functionally, acts as a GTPase activator for the Rac-type GTPase by converting it to an inactive GDP-bound state. This Arabidopsis thaliana (Mouse-ear cress) protein is Rho GTPase-activating protein 1 (ROPGAP1).